Reading from the N-terminus, the 344-residue chain is Phenylalanine--tRNA ligase alpha subunit (344 aa).

Residue E259 participates in Mg(2+) binding.

It belongs to the class-II aminoacyl-tRNA synthetase family. Phe-tRNA synthetase alpha subunit type 1 subfamily. Tetramer of two alpha and two beta subunits. Mg(2+) is required as a cofactor.

The protein localises to the cytoplasm. The enzyme catalyses tRNA(Phe) + L-phenylalanine + ATP = L-phenylalanyl-tRNA(Phe) + AMP + diphosphate + H(+). In Nitrosospira multiformis (strain ATCC 25196 / NCIMB 11849 / C 71), this protein is Phenylalanine--tRNA ligase alpha subunit.